The following is a 455-amino-acid chain: GTPase Der (455 aa).

EngA-type G domains are found at residues 4–174 (PIVA…PAGQ) and 183–358 (LKIA…SERN). Residues 10 to 17 (GRPNVGKS), 57 to 61 (DTAGL), 126 to 129 (NKAD), 189 to 196 (GRPNVGKS), 236 to 240 (DTAGI), and 301 to 304 (NKWD) contribute to the GTP site. The KH-like domain occupies 359-444 (KRVSTSDINN…PIILVFKGRE (86 aa)).

The protein belongs to the TRAFAC class TrmE-Era-EngA-EngB-Septin-like GTPase superfamily. EngA (Der) GTPase family. Associates with the 50S ribosomal subunit.

Its function is as follows. GTPase that plays an essential role in the late steps of ribosome biogenesis. The protein is GTPase Der of Herpetosiphon aurantiacus (strain ATCC 23779 / DSM 785 / 114-95).